Consider the following 447-residue polypeptide: Tubulin beta chain (447 aa).

Glutamine 11, glutamate 69, serine 138, glycine 142, threonine 143, glycine 144, asparagine 204, and asparagine 226 together coordinate GTP. Position 69 (glutamate 69) interacts with Mg(2+). The segment at glutamine 424–glutamate 447 is disordered. The segment covering glutamate 432–glutamate 447 has biased composition (acidic residues).

The protein belongs to the tubulin family. In terms of assembly, dimer of alpha and beta chains. A typical microtubule is a hollow water-filled tube with an outer diameter of 25 nm and an inner diameter of 15 nM. Alpha-beta heterodimers associate head-to-tail to form protofilaments running lengthwise along the microtubule wall with the beta-tubulin subunit facing the microtubule plus end conferring a structural polarity. Microtubules usually have 13 protofilaments but different protofilament numbers can be found in some organisms and specialized cells. Mg(2+) is required as a cofactor.

The protein resides in the cytoplasm. It localises to the cytoskeleton. Tubulin is the major constituent of microtubules, a cylinder consisting of laterally associated linear protofilaments composed of alpha- and beta-tubulin heterodimers. Microtubules grow by the addition of GTP-tubulin dimers to the microtubule end, where a stabilizing cap forms. Below the cap, tubulin dimers are in GDP-bound state, owing to GTPase activity of alpha-tubulin. The chain is Tubulin beta chain (TUB1) from Cochliobolus heterostrophus (Southern corn leaf blight fungus).